The chain runs to 202 residues: Tetranectin (202 aa).

A signal peptide spans 1–21 (MELWGAYLLLCLFSLLTQVTT). T25 carries O-linked (GalNAc...) threonine glycosylation. Cystine bridges form between C71/C81, C98/C197, and C173/C189. The region spanning 77-198 (VHMKCFLAFT…CRDQLPYICQ (122 aa)) is the C-type lectin domain.

Homotrimer. Found in plasma.

It localises to the secreted. In terms of biological role, tetranectin binds to plasminogen and to isolated kringle 4. May be involved in the packaging of molecules destined for exocytosis. Plays a role in retinal function. This Homo sapiens (Human) protein is Tetranectin (CLEC3B).